Here is a 424-residue protein sequence, read N- to C-terminus: UDP-N-acetylglucosamine 1-carboxyvinyltransferase (424 aa).

22–23 (KN) contacts phosphoenolpyruvate. Arg93 is a UDP-N-acetyl-alpha-D-glucosamine binding site. Residue Cys117 is the Proton donor of the active site. The residue at position 117 (Cys117) is a 2-(S-cysteinyl)pyruvic acid O-phosphothioketal. Residues 122–126 (RPIDL), Asp307, and Val329 each bind UDP-N-acetyl-alpha-D-glucosamine.

It belongs to the EPSP synthase family. MurA subfamily.

The protein resides in the cytoplasm. It carries out the reaction phosphoenolpyruvate + UDP-N-acetyl-alpha-D-glucosamine = UDP-N-acetyl-3-O-(1-carboxyvinyl)-alpha-D-glucosamine + phosphate. The protein operates within cell wall biogenesis; peptidoglycan biosynthesis. Functionally, cell wall formation. Adds enolpyruvyl to UDP-N-acetylglucosamine. In Chlorobium limicola (strain DSM 245 / NBRC 103803 / 6330), this protein is UDP-N-acetylglucosamine 1-carboxyvinyltransferase.